Reading from the N-terminus, the 726-residue chain is MSDKNHHSKCPVIHGANTNQQASEFNWWPKSLNLEILHQHDHKTDPMGADFNYADAFNSLDFEEVKKDLKDLMTDSQDWWPADWGHYGGLMIRMAWHSAGTYRIADGRGGASRGNQRFAPLNSWPDNGNLDKARRLLWPIKRKYGNKLSWADLMILAGNMAYESMGFKTFGFAGGREDIWHPEKDIYWGAEKEWLQPSGGENNRYSGERDLENPLAAVMMGLIYVNPEGVDGKPDPLKTAHDMRVTFARMAMNDEETVALTAGGHTVGKAHGNGDASVLEPEPEGAEIEDQGFGWLNKTSRGIGRDTVTSGVEGAWTTHPTKWDNGYFHLLFTYDWEITKSPAGAAQWEPIDIKEEDMPVDVEDSSIRHNPMMTDADMALKYDPEYRKIAERFRDNPKEFEDCFARAWFKLTHRDLGPKSRYLGPDVPAEDLIWQDPVPPVSYYLSEDNIDALKMAILNSELSIAELVSTAWDSARTYRGSDRRGGANGARIRLAPQKDWVGNEPERLQKVLNVLDEIRTMHHSPISMADLIVLAGGVGIEKAASNAGMNISVPFSQGRGDATDVMTDAESFDVLEPIHDGFRNWLKSDYVVTAEELLLERSQLMQLTAVEMTVLIGGMRVLGTNYGGTSQGVFTDNVGALTNDFFVHLTDMSYTWHPAGDNQYEIRERASGQTKWTASRVDLVFGSNSVLRSYAEVYAQDDNKEKFVQDFVAAWVKVMNNDRFDL.

Residues 96 to 224 (WHSAGTYRIA…LAAVMMGLIY (129 aa)) constitute a cross-link (tryptophyl-tyrosyl-methioninium (Trp-Tyr) (with M-250)). His97 functions as the Proton acceptor in the catalytic mechanism. The tryptophyl-tyrosyl-methioninium (Tyr-Met) (with W-96) cross-link spans 224-250 (YVNPEGVDGKPDPLKTAHDMRVTFARM). His265 is a heme b binding site.

This sequence belongs to the peroxidase family. Peroxidase/catalase subfamily. In terms of assembly, homodimer or homotetramer. It depends on heme b as a cofactor. Post-translationally, formation of the three residue Trp-Tyr-Met cross-link is important for the catalase, but not the peroxidase activity of the enzyme.

It carries out the reaction H2O2 + AH2 = A + 2 H2O. The catalysed reaction is 2 H2O2 = O2 + 2 H2O. In terms of biological role, bifunctional enzyme with both catalase and broad-spectrum peroxidase activity. This Vibrio campbellii (strain ATCC BAA-1116) protein is Catalase-peroxidase.